A 163-amino-acid polypeptide reads, in one-letter code: Epididymal-specific lipocalin-6 (163 aa).

The first 20 residues, 1–20 (MGGLLLAAFLALVSVPRAQA), serve as a signal peptide directing secretion.

This sequence belongs to the calycin superfamily. Lipocalin family. In terms of tissue distribution, predominantly expressed in epididymis.

The protein localises to the secreted. May play a role in male fertility. The polypeptide is Epididymal-specific lipocalin-6 (LCN6) (Homo sapiens (Human)).